Reading from the N-terminus, the 471-residue chain is MVNIVDSGSKHAPQEMEQFLPGEGKVMYKIQPRKSDTEQALAGNDFDPFALRDNPHPTTDNETLTHLLKASLGTGILGMPFAFMCSGLIMGIFSTIFTAFICTHCSYVLVKCGHKLYYRTRRTKMTFAEIAEAAFQKGPKWCRGFAPVAKFSILFGLFLTYFGTCSVYTVIVASNFEQLISYWTGTAVSLRMLICIMLVPLILIAWVPNLKYLAPVSMVANVFMGLGLGITFYYLVQDLPPVEERESVVWSTLPQFFSITIFAMEAIGVVMPLENNMKTPQSFLGICGVLSQGMSGVTLIYMLLGFLGYLRYGSATGESITLNLPIEEWPAQTVKVLISLAVYCTFGLQFFVCLEIIWDGIKEKCKKRPTLVNYVLRTVLVTAAVVLAVAVPTIGPFMGLIGAFCFSILGLIFPVVIELIVHWESGFGKYNWILWKNAIITLCGIGALVFGTQAAIKDIVKAYSNNENVGE.

N-linked (GlcNAc...) asparagine glycosylation occurs at asparagine 61. The next 10 helical transmembrane spans lie at 81-101 (FAFM…TAFI), 153-173 (ILFG…VIVA), 187-207 (AVSL…IAWV), 216-236 (VSMV…YYLV), 253-273 (LPQF…VMPL), 283-303 (FLGI…IYML), 337-357 (LISL…LEII), 375-395 (VLRT…PTIG), 397-417 (FMGL…PVVI), and 432-452 (WILW…VFGT).

Belongs to the amino acid/polyamine transporter 2 family. As to expression, in third instar larvae, expressed at highest levels in the brain and digestive system with particularly high levels in surface glia of the brain (at protein level). In third instar larvae, expressed in all cells of the body wall (at protein level). Within the body wall of third instar larvae, most highly expressed in epithelial cells and sensory neurons. Expressed at a similar level in all da neurons (at protein level). Widely expressed during embryonic and late larval stages. Levels are highly dynamic in embryogenesis with surges of expression in many structures, including muscle primordia, salivary glands, proventriculus, trachea and gonads. Expressed in all or most cells of larval imaginal disks. Expression is also particularly strong in the pouch and hinge regions of the wing disk and in the morphogenetic furrow of the eye disk.

Its subcellular location is the cell membrane. The protein resides in the lysosome membrane. It localises to the late endosome membrane. The protein localises to the cell projection. It is found in the axon. Its subcellular location is the dendrite. The protein resides in the perikaryon. It localises to the cytoplasm. Amino acid transporter which has pH-dependent electrogenic transport activity for alanine and glycine but not for proline. Plays a role in positive regulation of growth by directly or indirectly modulating the effects of the TOR signaling pathway. Required in a cell-autonomous manner for dendrite growth in neurons with large dendrite arbors. This is Proton-coupled amino acid transporter-like protein pathetic from Drosophila melanogaster (Fruit fly).